Here is a 422-residue protein sequence, read N- to C-terminus: MPEVKVPELAESITEGTIAEWLKNVGDSVEKGEAILELETDKVNVEVVSEEAGVLSEQLASEGDTVEVGQAIAIIGEGSGNASKENSNDNTPQQNEETNNKKEETTNNSVDKAEVNQANDDNQQRINATPSARRYARENGVNLAEVSPKTNDVVRKEDIDKKQQAPASTQTTQQAPAKEEKKYNQYPTKPVIREKMSRRKKTAAKKLLEVSNNTAMLTTFNEVDMTNVMELRKRKKEQFMKDHDGTKLGFMSFFTKASVAALKKYPEVNAEIDGDDMITKQYYDIGVAVSTDDGLLVPFVRDCDKKNFAEIEAEIANLAVKAREKKLGLDDMVNGSFTITNGGIFGSMMSTPIINGNQAAILGMHSIITRPIAIDQDTIENRPMMYIALSYDHRIIDGKEAVGFLKTIKELIENPEDLLLES.

Residues 1–76 (MPEVKVPELA…EVGQAIAIIG (76 aa)) enclose the Lipoyl-binding domain. The residue at position 42 (K42) is an N6-lipoyllysine. The tract at residues 77–184 (EGSGNASKEN…APAKEEKKYN (108 aa)) is disordered. Composition is skewed to polar residues over residues 80–94 (GNAS…TPQQ) and 116–130 (NQAN…NATP). A Peripheral subunit-binding (PSBD) domain is found at 127–163 (NATPSARRYARENGVNLAEVSPKTNDVVRKEDIDKKQ). Positions 152–163 (DVVRKEDIDKKQ) are enriched in basic and acidic residues. A compositionally biased stretch (low complexity) spans 164 to 176 (QAPASTQTTQQAP). Active-site residues include H393 and D397.

Belongs to the 2-oxoacid dehydrogenase family. Forms a 24-polypeptide structural core with octahedral symmetry. Part of the 2-oxoglutarate dehydrogenase (OGDH) complex composed of E1 (2-oxoglutarate dehydrogenase), E2 (dihydrolipoamide succinyltransferase) and E3 (dihydrolipoamide dehydrogenase); the complex contains multiple copies of the three enzymatic components (E1, E2 and E3). Requires (R)-lipoate as cofactor.

The catalysed reaction is N(6)-[(R)-dihydrolipoyl]-L-lysyl-[protein] + succinyl-CoA = N(6)-[(R)-S(8)-succinyldihydrolipoyl]-L-lysyl-[protein] + CoA. It functions in the pathway amino-acid degradation; L-lysine degradation via saccharopine pathway; glutaryl-CoA from L-lysine: step 6/6. Its function is as follows. E2 component of the 2-oxoglutarate dehydrogenase (OGDH) complex which catalyzes the second step in the conversion of 2-oxoglutarate to succinyl-CoA and CO(2). This is Dihydrolipoyllysine-residue succinyltransferase component of 2-oxoglutarate dehydrogenase complex (odhB) from Staphylococcus aureus (strain Mu50 / ATCC 700699).